Here is a 217-residue protein sequence, read N- to C-terminus: Small ribosomal subunit protein uS3 (217 aa).

The KH type-2 domain occupies 38-106 (IRKFIDNELK…KVHINVIEIK (69 aa)).

Belongs to the universal ribosomal protein uS3 family. As to quaternary structure, part of the 30S ribosomal subunit. Forms a tight complex with proteins S10 and S14.

Functionally, binds the lower part of the 30S subunit head. Binds mRNA in the 70S ribosome, positioning it for translation. This chain is Small ribosomal subunit protein uS3, found in Staphylococcus epidermidis (strain ATCC 35984 / DSM 28319 / BCRC 17069 / CCUG 31568 / BM 3577 / RP62A).